The primary structure comprises 559 residues: Urocanate hydratase (559 aa).

Residues 53-54 (GG), Gln-131, 177-179 (GMG), Glu-197, Arg-202, 243-244 (NA), 264-268 (QTSAH), 274-275 (YL), and Tyr-323 contribute to the NAD(+) site. The active site involves Cys-411. Gly-493 is an NAD(+) binding site.

Belongs to the urocanase family. Requires NAD(+) as cofactor.

The protein resides in the cytoplasm. The enzyme catalyses 4-imidazolone-5-propanoate = trans-urocanate + H2O. The protein operates within amino-acid degradation; L-histidine degradation into L-glutamate; N-formimidoyl-L-glutamate from L-histidine: step 2/3. Functionally, catalyzes the conversion of urocanate to 4-imidazolone-5-propionate. The chain is Urocanate hydratase from Pseudomonas paraeruginosa (strain DSM 24068 / PA7) (Pseudomonas aeruginosa (strain PA7)).